The sequence spans 126 residues: Small ribosomal subunit protein uS12c (126 aa).

It belongs to the universal ribosomal protein uS12 family. Part of the 30S ribosomal subunit.

It is found in the plastid. The protein localises to the chloroplast. In terms of biological role, with S4 and S5 plays an important role in translational accuracy. Located at the interface of the 30S and 50S subunits. This chain is Small ribosomal subunit protein uS12c (rps12), found in Trieres chinensis (Marine centric diatom).